We begin with the raw amino-acid sequence, 254 residues long: MILVIDVGNTNIVLGMYDGDNLVHHWRISTDRTKTTDEYGMLVKSLFDHSNVSFEQVEGVILSSVVPPVIFPLEQMSQRYFNVRPIVVGPGVKTGLDIHVENPREVGADRIVNAVAGIAKYDGPLIIVDFGTATTYCYIDEKRRYHGGIISPGIMISVEALYQRAAKLPRIELATPPTVIGKNTIQAMQSGTYYGYVAQVDGIVNRMKREVGEATVIATGGLARLISEHAETIDHVDSFLTLEGLRLIYERNQK.

Residue D6 to V13 participates in ATP binding. G107–R110 serves as a coordination point for substrate. The Proton acceptor role is filled by D109. A K(+)-binding site is contributed by D129. T132 lines the ATP pocket. Substrate is bound at residue T184.

It belongs to the type III pantothenate kinase family. As to quaternary structure, homodimer. It depends on NH4(+) as a cofactor. K(+) is required as a cofactor.

Its subcellular location is the cytoplasm. The catalysed reaction is (R)-pantothenate + ATP = (R)-4'-phosphopantothenate + ADP + H(+). It functions in the pathway cofactor biosynthesis; coenzyme A biosynthesis; CoA from (R)-pantothenate: step 1/5. Its function is as follows. Catalyzes the phosphorylation of pantothenate (Pan), the first step in CoA biosynthesis. In Exiguobacterium sp. (strain ATCC BAA-1283 / AT1b), this protein is Type III pantothenate kinase.